The following is a 222-amino-acid chain: PKHD-type hydroxylase Syncc9605_1577 (222 aa).

Positions Lys80 to Ser175 constitute a Fe2OG dioxygenase domain. His98, Asp100, and His156 together coordinate Fe cation. Arg166 contributes to the 2-oxoglutarate binding site.

Requires Fe(2+) as cofactor. L-ascorbate is required as a cofactor.

In Synechococcus sp. (strain CC9605), this protein is PKHD-type hydroxylase Syncc9605_1577.